The sequence spans 142 residues: Putative pre-16S rRNA nuclease (142 aa).

Belongs to the YqgF nuclease family.

It localises to the cytoplasm. Functionally, could be a nuclease involved in processing of the 5'-end of pre-16S rRNA. The protein is Putative pre-16S rRNA nuclease of Nitratidesulfovibrio vulgaris (strain DP4) (Desulfovibrio vulgaris).